The primary structure comprises 122 residues: Large ribosomal subunit protein uL14 (122 aa).

This sequence belongs to the universal ribosomal protein uL14 family. In terms of assembly, part of the 50S ribosomal subunit. Forms a cluster with proteins L3 and L19. In the 70S ribosome, L14 and L19 interact and together make contacts with the 16S rRNA in bridges B5 and B8.

In terms of biological role, binds to 23S rRNA. Forms part of two intersubunit bridges in the 70S ribosome. This Rubrobacter xylanophilus (strain DSM 9941 / JCM 11954 / NBRC 16129 / PRD-1) protein is Large ribosomal subunit protein uL14.